The following is a 232-amino-acid chain: 5'-methylthioadenosine/S-adenosylhomocysteine nucleosidase (232 aa).

The active-site Proton acceptor is Glu12. Substrate-binding positions include Gly78, Ile152, and 173–174; that span reads ME. The Proton donor role is filled by Asp197.

This sequence belongs to the PNP/UDP phosphorylase family. MtnN subfamily. As to quaternary structure, homodimer.

It carries out the reaction S-adenosyl-L-homocysteine + H2O = S-(5-deoxy-D-ribos-5-yl)-L-homocysteine + adenine. It catalyses the reaction S-methyl-5'-thioadenosine + H2O = 5-(methylsulfanyl)-D-ribose + adenine. The enzyme catalyses 5'-deoxyadenosine + H2O = 5-deoxy-D-ribose + adenine. It participates in amino-acid biosynthesis; L-methionine biosynthesis via salvage pathway; S-methyl-5-thio-alpha-D-ribose 1-phosphate from S-methyl-5'-thioadenosine (hydrolase route): step 1/2. Catalyzes the irreversible cleavage of the glycosidic bond in both 5'-methylthioadenosine (MTA) and S-adenosylhomocysteine (SAH/AdoHcy) to adenine and the corresponding thioribose, 5'-methylthioribose and S-ribosylhomocysteine, respectively. Also cleaves 5'-deoxyadenosine, a toxic by-product of radical S-adenosylmethionine (SAM) enzymes, into 5-deoxyribose and adenine. Thus, is required for in vivo function of the radical SAM enzymes biotin synthase and lipoic acid synthase, that are inhibited by 5'-deoxyadenosine accumulation. In Pectobacterium carotovorum subsp. carotovorum (strain PC1), this protein is 5'-methylthioadenosine/S-adenosylhomocysteine nucleosidase.